A 793-amino-acid chain; its full sequence is Coiled-coil domain-containing protein 175 (793 aa).

Coiled coils occupy residues 131-163 (EINT…NEAL), 205-377 (KRED…VLSE), 431-535 (KTVY…MLMK), 562-679 (LPQL…KYRE), and 716-745 (LVDN…QHVS).

The sequence is that of Coiled-coil domain-containing protein 175 (CCDC175) from Homo sapiens (Human).